Reading from the N-terminus, the 213-residue chain is Ras-related protein Rab-4B (213 aa).

An N-acetylalanine modification is found at Ala2. GDP-binding residues include Gly18, Thr19, Gly20, Lys21, Ser22, and Cys23. GTP-binding residues include Gly18, Thr19, Gly20, Lys21, Ser22, Cys23, Ser37, His39, and Thr40. Mg(2+) is bound at residue Ser22. Residues 39-44 (HTIGVE) carry the Switch 1 motif. 2 residues coordinate Mg(2+): Thr40 and Asp63. Residues 65 to 74 (AGQERFRSVT) carry the Switch 2 motif. Gly66 is a binding site for GTP. Gln67 is subject to 5-glutamyl serotonin. Residues Asn121, Lys122, Asp124, Ala152, and Leu153 each coordinate GDP. Residues Asn121, Lys122, Asp124, Ala152, and Leu153 each coordinate GTP. A phosphoserine mark is found at Ser185 and Ser193. 2 S-geranylgeranyl cysteine lipidation sites follow: Cys211 and Cys213. The residue at position 213 (Cys213) is a Cysteine methyl ester.

The protein belongs to the small GTPase superfamily. Rab family. In terms of assembly, interacts (GTP-bound form) with RUFY1; the interaction allows endosomal tethering and fusion. It depends on Mg(2+) as a cofactor. Serotonylation of Gln-67 by TGM2 during activation and aggregation of platelets leads to constitutive activation of GTPase activity.

It is found in the cell membrane. The protein localises to the early endosome membrane. It carries out the reaction GTP + H2O = GDP + phosphate + H(+). With respect to regulation, regulated by guanine nucleotide exchange factors (GEFs) which promote the exchange of bound GDP for free GTP. Regulated by GTPase activating proteins (GAPs) which increase the GTP hydrolysis activity. Inhibited by GDP dissociation inhibitors (GDIs). In terms of biological role, the small GTPases Rab are key regulators of intracellular membrane trafficking, from the formation of transport vesicles to their fusion with membranes. Rabs cycle between an inactive GDP-bound form and an active GTP-bound form that is able to recruit to membranes different set of downstream effectors directly responsible for vesicle formation, movement, tethering and fusion. RAB4B mediates endosomal tethering and fusion through the interaction with RUFY1 and RAB14. Acts as a regulator of platelet alpha-granule release during activation and aggregation of platelets. The sequence is that of Ras-related protein Rab-4B from Mus musculus (Mouse).